A 623-amino-acid chain; its full sequence is Leucine-rich repeat, immunoglobulin-like domain and transmembrane domain-containing protein 1 (623 aa).

A signal peptide spans 1 to 21 (MRVALGMLWLLALAWPPQARG). Residues 22–59 (FCPSQCSCSLHIMGDGSKARTVVCNDPDMTLPPASIPP) form the LRRNT domain. Residues 22-526 (FCPSQCSCSL…EVVDAENTQQ (505 aa)) lie on the Lumenal side of the membrane. LRR repeat units follow at residues 60-81 (DTSR…AFRP), 84-105 (RLEQ…MLRG), 108-129 (RLRE…ALRD), 132-153 (KLRL…AARF), and 156-177 (NLTF…LIVS). A glycan (N-linked (GlcNAc...) asparagine) is linked at asparagine 156. One can recognise an LRRCT domain in the interval 201 to 253 (NPWACDCRLYDLVHLLDGWAPNLAFIETELRCASPRSLAGVAFSQLELRKCQG). The Ig-like C2-type domain maps to 266–335 (LLGGTALLRC…YICQAKNFLG (70 aa)). An intrachain disulfide couples cysteine 275 to cysteine 328. N-linked (GlcNAc...) asparagine glycosylation is found at asparagine 296 and asparagine 455. Residues 430-518 (MVRSVKVVGD…QCVIFSTNEV (89 aa)) enclose the Fibronectin type-III domain. A helical membrane pass occupies residues 527 to 547 (LINVVVISVAIVIALPLTLLV). Over 548–623 (CCSALQKRCR…GGRRINEYFC (76 aa)) the chain is Cytoplasmic. Residues 571–594 (YVNLERLGYSEDGLEELSRHSVSE) form an LRR 6 repeat.

May form a homodimer. Interacts with LRIT2; may form a heterodimer with LRIT2. Interacts (via its N-terminal extracellular domain) with metabotropic glutamate receptor GRM6. Interacts (via its extreme C-terminus) with the scaffold protein FRMPD2 (via the third PDZ domain); the interaction leads to their colocalization in photoreceptor synapses.

It localises to the endoplasmic reticulum membrane. It is found in the cell projection. The protein resides in the dendrite. In terms of biological role, photoreceptor synaptic protein essential for normal vision. Involved in synapse formation in cone photoreceptor cells. This chain is Leucine-rich repeat, immunoglobulin-like domain and transmembrane domain-containing protein 1 (LRIT1), found in Homo sapiens (Human).